The following is a 140-amino-acid chain: Nucleoside diphosphate kinase (140 aa).

Lys11, Phe59, Arg87, Thr93, Arg104, and Asn114 together coordinate ATP. The Pros-phosphohistidine intermediate role is filled by His117.

The protein belongs to the NDK family. Homotetramer. Requires Mg(2+) as cofactor.

The protein localises to the cytoplasm. The catalysed reaction is a 2'-deoxyribonucleoside 5'-diphosphate + ATP = a 2'-deoxyribonucleoside 5'-triphosphate + ADP. It carries out the reaction a ribonucleoside 5'-diphosphate + ATP = a ribonucleoside 5'-triphosphate + ADP. In terms of biological role, major role in the synthesis of nucleoside triphosphates other than ATP. The ATP gamma phosphate is transferred to the NDP beta phosphate via a ping-pong mechanism, using a phosphorylated active-site intermediate. This is Nucleoside diphosphate kinase from Rhodopseudomonas palustris (strain HaA2).